We begin with the raw amino-acid sequence, 609 residues long: Glutamine--fructose-6-phosphate aminotransferase [isomerizing] (609 aa).

The active-site Nucleophile; for GATase activity is the Cys-2. The Glutamine amidotransferase type-2 domain occupies 2-219 (CGIFGYIGAK…SGELAVVGLG (218 aa)). 2 SIS domains span residues 280 to 426 (ISEK…LKQT) and 458 to 599 (WAND…IDRP). Lys-604 acts as the For Fru-6P isomerization activity in catalysis.

Homodimer.

Its subcellular location is the cytoplasm. It carries out the reaction D-fructose 6-phosphate + L-glutamine = D-glucosamine 6-phosphate + L-glutamate. Catalyzes the first step in hexosamine metabolism, converting fructose-6P into glucosamine-6P using glutamine as a nitrogen source. The chain is Glutamine--fructose-6-phosphate aminotransferase [isomerizing] from Chlamydia caviae (strain ATCC VR-813 / DSM 19441 / 03DC25 / GPIC) (Chlamydophila caviae).